The following is a 484-amino-acid chain: Protein nucleotidyltransferase YdiU (484 aa).

ATP contacts are provided by G81, G83, R84, K103, D115, G116, R166, and R173. D244 functions as the Proton acceptor in the catalytic mechanism. Residues N245 and D254 each contribute to the Mg(2+) site. D254 is a binding site for ATP.

It belongs to the SELO family. Mg(2+) is required as a cofactor. The cofactor is Mn(2+).

It carries out the reaction L-seryl-[protein] + ATP = 3-O-(5'-adenylyl)-L-seryl-[protein] + diphosphate. The catalysed reaction is L-threonyl-[protein] + ATP = 3-O-(5'-adenylyl)-L-threonyl-[protein] + diphosphate. The enzyme catalyses L-tyrosyl-[protein] + ATP = O-(5'-adenylyl)-L-tyrosyl-[protein] + diphosphate. It catalyses the reaction L-histidyl-[protein] + UTP = N(tele)-(5'-uridylyl)-L-histidyl-[protein] + diphosphate. It carries out the reaction L-seryl-[protein] + UTP = O-(5'-uridylyl)-L-seryl-[protein] + diphosphate. The catalysed reaction is L-tyrosyl-[protein] + UTP = O-(5'-uridylyl)-L-tyrosyl-[protein] + diphosphate. Nucleotidyltransferase involved in the post-translational modification of proteins. It can catalyze the addition of adenosine monophosphate (AMP) or uridine monophosphate (UMP) to a protein, resulting in modifications known as AMPylation and UMPylation. The chain is Protein nucleotidyltransferase YdiU from Shewanella putrefaciens (strain CN-32 / ATCC BAA-453).